The sequence spans 480 residues: MTTTVETAAATGRVARVIGPVVDVEFPVDAMPEIYNALHVEVADPAEDGARKTLTLEVAQHLGDGVVRAISMQPTDGLVRQAPVTDTGTGITVPVGDVTKGKVFNTLGQILNEPEAEAQITERWPIHRKAPAFDQLESKTEMFETGLKVVDLLTPYVKGGKIGLFGGAGVGKTVLIQEMIMRVAKLHDGVSVFAGVGERTREGNDLIDEMTESGVLEKTALVFGQMDEPPGTRLRVALSALTMAEYFRDVQKQDVLLFIDNIFRFTQAGSEVSTLLGRMPSAVGYQPTLADEMGVLQERITSTRGHSITSMQAIYVPADDLTDPAPATTFAHLDATTVLSRPISEKGIYPAVDPLDSTSRILDPRYISQDHYAAASRVKGILQKYKDLQDIIAILGIDELGEEDKLVVHRARRVERFLSQNTHAAKQFTGLDGSDVPLDESIAAFNAICDGDYDHFPEQAFFMCGGLDDLKAKAKELGVS.

166-173 (GGAGVGKT) lines the ATP pocket.

This sequence belongs to the ATPase alpha/beta chains family. As to quaternary structure, F-type ATPases have 2 components, CF(1) - the catalytic core - and CF(0) - the membrane proton channel. CF(1) has five subunits: alpha(3), beta(3), gamma(1), delta(1), epsilon(1). CF(0) has three main subunits: a(1), b(2) and c(9-12). The alpha and beta chains form an alternating ring which encloses part of the gamma chain. CF(1) is attached to CF(0) by a central stalk formed by the gamma and epsilon chains, while a peripheral stalk is formed by the delta and b chains.

It localises to the cell membrane. It carries out the reaction ATP + H2O + 4 H(+)(in) = ADP + phosphate + 5 H(+)(out). In terms of biological role, produces ATP from ADP in the presence of a proton gradient across the membrane. The catalytic sites are hosted primarily by the beta subunits. The sequence is that of ATP synthase subunit beta from Streptomyces griseus subsp. griseus (strain JCM 4626 / CBS 651.72 / NBRC 13350 / KCC S-0626 / ISP 5235).